We begin with the raw amino-acid sequence, 112 residues long: MNLSIFSAIIFSITIASSAIPISENYVSWSSDSNCLDFDDSRDPNAVCEATTTWKRSENSSCIVSVYYVKKEKSSGTSNGIPQCSKTPCDATEKIVVDCETAFREKLANINH.

Positions 1–19 are cleaved as a signal peptide; it reads MNLSIFSAIIFSITIASSA. A glycan (N-linked (GlcNAc...) asparagine) is linked at Asn-59.

It belongs to the UPF0375 family.

The protein resides in the secreted. The sequence is that of UPF0375 protein R05A10.4 from Caenorhabditis elegans.